Reading from the N-terminus, the 348-residue chain is NADH-ubiquinone oxidoreductase chain 2 (348 aa).

11 consecutive transmembrane segments (helical) span residues 3-23, 25-45, 67-87, 95-115, 118-138, 149-171, 178-198, 203-223, 240-260, 274-294, and 324-344; these read PVVLTIIISSLGLGTMMTFIG, HWLLVWMGLEINTLAIIPLMI, SALLLFASITNAWSLGEWSLL, ATLVTIALALKIGLAPMHFWL, VLQGLDLITGLILATWQKLAP, LNSNLLLFLGVSSTVIGGWGGLN, ILAYSSIAHLGWMITILHYSP, LNLALYIIMTLTTFLLFKLFN, LSIIALITLLSLGGLPPLSGF, DLAIPATIMALAALLSLFFYL, and LILMMATSLSILLLPLTPTIF.

It belongs to the complex I subunit 2 family.

The protein resides in the mitochondrion inner membrane. The enzyme catalyses a ubiquinone + NADH + 5 H(+)(in) = a ubiquinol + NAD(+) + 4 H(+)(out). In terms of biological role, core subunit of the mitochondrial membrane respiratory chain NADH dehydrogenase (Complex I) that is believed to belong to the minimal assembly required for catalysis. Complex I functions in the transfer of electrons from NADH to the respiratory chain. The immediate electron acceptor for the enzyme is believed to be ubiquinone. The protein is NADH-ubiquinone oxidoreductase chain 2 (MT-ND2) of Squalus acanthias (Spiny dogfish).